The sequence spans 446 residues: Phosphoglucosamine mutase (446 aa).

The active-site Phosphoserine intermediate is the serine 103. Mg(2+)-binding residues include serine 103, aspartate 242, aspartate 244, and aspartate 246. At serine 103 the chain carries Phosphoserine.

The protein belongs to the phosphohexose mutase family. Mg(2+) is required as a cofactor. Post-translationally, activated by phosphorylation.

It carries out the reaction alpha-D-glucosamine 1-phosphate = D-glucosamine 6-phosphate. Functionally, catalyzes the conversion of glucosamine-6-phosphate to glucosamine-1-phosphate. The polypeptide is Phosphoglucosamine mutase (Vibrio campbellii (strain ATCC BAA-1116)).